The sequence spans 488 residues: 3-octaprenyl-4-hydroxybenzoate carboxy-lyase (488 aa).

Asn-172 provides a ligand contact to Mn(2+). Prenylated FMN is bound by residues 175 to 177, 189 to 191, and 194 to 195; these read IYR, RWL, and RG. Glu-238 contacts Mn(2+). The Proton donor role is filled by Asp-287.

It belongs to the UbiD family. In terms of assembly, homohexamer. Prenylated FMN serves as cofactor. Requires Mn(2+) as cofactor.

It localises to the cell membrane. The catalysed reaction is a 4-hydroxy-3-(all-trans-polyprenyl)benzoate + H(+) = a 2-(all-trans-polyprenyl)phenol + CO2. The protein operates within cofactor biosynthesis; ubiquinone biosynthesis. Functionally, catalyzes the decarboxylation of 3-octaprenyl-4-hydroxy benzoate to 2-octaprenylphenol, an intermediate step in ubiquinone biosynthesis. This is 3-octaprenyl-4-hydroxybenzoate carboxy-lyase from Pseudomonas fluorescens (strain Pf0-1).